The primary structure comprises 370 residues: Anhydro-N-acetylmuramic acid kinase (370 aa).

Position 13-20 (13-20 (GTSMDGVD)) interacts with ATP.

The protein belongs to the anhydro-N-acetylmuramic acid kinase family.

The enzyme catalyses 1,6-anhydro-N-acetyl-beta-muramate + ATP + H2O = N-acetyl-D-muramate 6-phosphate + ADP + H(+). The protein operates within amino-sugar metabolism; 1,6-anhydro-N-acetylmuramate degradation. It functions in the pathway cell wall biogenesis; peptidoglycan recycling. Its function is as follows. Catalyzes the specific phosphorylation of 1,6-anhydro-N-acetylmuramic acid (anhMurNAc) with the simultaneous cleavage of the 1,6-anhydro ring, generating MurNAc-6-P. Is required for the utilization of anhMurNAc either imported from the medium or derived from its own cell wall murein, and thus plays a role in cell wall recycling. The chain is Anhydro-N-acetylmuramic acid kinase from Shewanella frigidimarina (strain NCIMB 400).